We begin with the raw amino-acid sequence, 738 residues long: NAD(P)H-quinone oxidoreductase subunit 5, chloroplastic (738 aa).

16 helical membrane-spanning segments follow: residues 9–29 (WIIP…LLLF), 40–60 (WAFP…NLSI), 89–109 (IDPL…MVLI), 125–145 (FASM…SNLI), 147–167 (IYIF…FWFT), 185–205 (GDFG…SFEF), 230–250 (AALL…HVWL), 258–278 (TPIS…FLVA), 280–300 (LLPL…IGII), 327–347 (LGYM…FHLI), 354–374 (ALLF…VGYS), 396–416 (ISFL…CFWS), 425–445 (WLYS…TAFY), 546–566 (LFPL…GIPF), 603–623 (FSVS…KPIY), and 718–738 (YLFF…FPVF).

Belongs to the complex I subunit 5 family. NDH is composed of at least 16 different subunits, 5 of which are encoded in the nucleus.

The protein resides in the plastid. Its subcellular location is the chloroplast thylakoid membrane. It catalyses the reaction a plastoquinone + NADH + (n+1) H(+)(in) = a plastoquinol + NAD(+) + n H(+)(out). The catalysed reaction is a plastoquinone + NADPH + (n+1) H(+)(in) = a plastoquinol + NADP(+) + n H(+)(out). In terms of biological role, NDH shuttles electrons from NAD(P)H:plastoquinone, via FMN and iron-sulfur (Fe-S) centers, to quinones in the photosynthetic chain and possibly in a chloroplast respiratory chain. The immediate electron acceptor for the enzyme in this species is believed to be plastoquinone. Couples the redox reaction to proton translocation, and thus conserves the redox energy in a proton gradient. This chain is NAD(P)H-quinone oxidoreductase subunit 5, chloroplastic (ndhF), found in Ligustrum vulgare (Common privet).